A 2434-amino-acid polypeptide reads, in one-letter code: ATP-binding cassette sub-family A member 2 (2434 aa).

N-linked (GlcNAc...) asparagine glycosylation is present at Asn-14. The next 2 helical transmembrane spans lie at 22–42 (PWVL…LLGL) and 54–74 (AFYT…QSLC). Residues Asn-89, Asn-168, and Asn-173 are each glycosylated (N-linked (GlcNAc...) asparagine). Gln-271 carries the N5-methylglutamine modification. 13 N-linked (GlcNAc...) asparagine glycosylation sites follow: Asn-305, Asn-368, Asn-379, Asn-420, Asn-432, Asn-476, Asn-484, Asn-494, Asn-530, Asn-549, Asn-590, Asn-600, and Asn-628. A compositionally biased stretch (low complexity) spans 354-369 (RAPAPQAGSPSGPANS). The disordered stretch occupies residues 354 to 396 (RAPAPQAGSPSGPANSTGVGANTGPNTTVEEGTQSPVTPASPD). Residues 370-396 (TGVGANTGPNTTVEEGTQSPVTPASPD) are compositionally biased toward polar residues. Helical transmembrane passes span 699-719 (FLFV…VYSV), 750-770 (VAWF…LTAI), 782-802 (VLII…FCFL), 813-833 (ASAC…YVAI), 857-877 (AFGL…GIQW), and 893-913 (LLAV…TWYI). The region spanning 990–1221 (VCVDKLTKVY…YGDGYRLTLV (232 aa)) is the ABC transporter 1 domain. 1024 to 1031 (GHNGAGKT) provides a ligand contact to ATP. The interval 1225–1246 (AEPGTSQEPGMASSPSGRPQLS) is disordered. Polar residues predominate over residues 1228–1246 (GTSQEPGMASSPSGRPQLS). Ser-1238 carries the phosphoserine modification. N-linked (GlcNAc...) asparagine glycosylation is present at Asn-1247. A phosphoserine mark is found at Ser-1327 and Ser-1331. Residues 1461 to 1481 (ILLPAFFVCVAMTVALSVPEI) form a helical membrane-spanning segment. Asn-1496, Asn-1549, and Asn-1557 each carry an N-linked (GlcNAc...) asparagine glycan. The disordered stretch occupies residues 1587–1606 (NFVPPPPSPAPSDSPLSPDE). Positions 1589–1598 (VPPPPSPAPS) are enriched in pro residues. N-linked (GlcNAc...) asparagine glycans are attached at residues Asn-1613, Asn-1678, and Asn-1776. 5 helical membrane-spanning segments follow: residues 1793–1813 (VVIA…FVVF), 1842–1862 (VWDM…LFVF), 1873–1893 (FPAV…IMYP), 1906–1926 (VFLI…TFLL), and 1992–2012 (GLVA…MCQY). The region spanning 2051-2286 (VKIENLTKVY…FGDGYMITVR (236 aa)) is the ABC transporter 2 domain. Asn-2055 carries an N-linked (GlcNAc...) asparagine glycan. An ATP-binding site is contributed by 2088-2095 (GVNGAGKT). Residue Thr-2411 is modified to Phosphothreonine.

This sequence belongs to the ABC transporter superfamily. ABCA family. Post-translationally, N-glycosylated. In terms of processing, methylated at Gln-271 by N6AMT1. In terms of tissue distribution, expressed at high levels in brain, at moderate levels in heart, kidney and lung, and at low levels in skeletal muscle, stomach, spleen, colon and pancreas. Not detected in the liver or small intestine. In brain, highly expressed in white matter and detected in oligodendrocytes. Expressed in cerebellum as well as the anterior commissure. Expressed mainly in the white matter but is also scattered in gray matter throughout the whole brain. Expressed in myelinating cells of both ventral and dorsal restricted regions in newborn spinal cord. Expressed in non-myelin-forming as well as in myelin-forming Schwann cells in the sciatic nerve.

Its subcellular location is the endosome membrane. It is found in the lysosome membrane. Its function is as follows. Probable transporter, its natural substrate has not been found yet. May have a role in macrophage lipid metabolism and neural development. May play a role in myelination, perhaps as a transporter for certain kinds of myelin chemical components. May play an important role in gamma-secretase processing of APP and thus in amyloid-beta peptide generation. Regulates esterification of plasma membrane cholesterol by modulation of sphingolipid metabolism. In terms of biological role, probable lipid transporter that modulates cholesterol sequestration in the late endosome/lysosome by regulating the intracellular sphingolipid metabolism, in turn participates in cholesterol homeostasis. May alter the transbilayer distribution of ceramide in the intraluminal membrane lipid bilayer, favoring its retention in the outer leaflet that results in increased acid ceramidase activity in the late endosome/lysosome, facilitating ceramide deacylation to sphingosine leading to the sequestration of free cholesterol in lysosomes. In addition regulates amyloid-beta production either by activating a signaling pathway that regulates amyloid precursor protein transcription through the modulation of sphingolipid metabolism or through its role in gamma-secretase processing of APP. May play a role in myelin formation. The chain is ATP-binding cassette sub-family A member 2 from Rattus norvegicus (Rat).